We begin with the raw amino-acid sequence, 305 residues long: Ribonuclease BN (305 aa).

Zn(2+)-binding residues include histidine 64, histidine 66, aspartate 68, histidine 69, histidine 141, aspartate 212, and histidine 270. Aspartate 68 acts as the Proton acceptor in catalysis.

Belongs to the RNase Z family. RNase BN subfamily. In terms of assembly, homodimer. It depends on Zn(2+) as a cofactor.

In terms of biological role, zinc phosphodiesterase, which has both exoribonuclease and endoribonuclease activities. The chain is Ribonuclease BN from Enterobacter sp. (strain 638).